The following is a 422-amino-acid chain: Probable sucrose-phosphatase 2 (422 aa).

Belongs to the sucrose phosphatase family. Homodimer. Mg(2+) serves as cofactor.

It catalyses the reaction sucrose 6(F)-phosphate + H2O = sucrose + phosphate. Its pathway is glycan biosynthesis; sucrose biosynthesis; sucrose from D-fructose 6-phosphate and UDP-alpha-D-glucose: step 2/2. In terms of biological role, catalyzes the final step of sucrose synthesis. The protein is Probable sucrose-phosphatase 2 (SPP2) of Arabidopsis thaliana (Mouse-ear cress).